The sequence spans 620 residues: Phosphopentomutase (620 aa).

Positions 71 and 173 each coordinate alpha-D-glucose 1,6-bisphosphate. Ser-173 (phosphoserine intermediate) is an active-site residue. Residues Ser-173, Asp-330, Asp-332, and Asp-334 each contribute to the Mg(2+) site. Ser-173 is modified (phosphoserine). Alpha-D-glucose 1,6-bisphosphate contacts are provided by Asp-334, Arg-335, Thr-408, Glu-432, and Lys-446.

This sequence belongs to the phosphohexose mutase family. In terms of assembly, monomer. It depends on Mg(2+) as a cofactor. As to expression, highly expressed in lung, spleen and thymus. Expressed at lower levels in liver, brain, kidney, skeletal muscle, testis and heart.

Its subcellular location is the cytoplasm. The protein localises to the cytosol. It carries out the reaction alpha-D-ribose 1-phosphate = D-ribose 5-phosphate. The enzyme catalyses 2-deoxy-alpha-D-ribose 1-phosphate = 2-deoxy-D-ribose 5-phosphate. It catalyses the reaction alpha-D-glucose 1-phosphate = alpha-D-glucose 6-phosphate. The catalysed reaction is O-phospho-L-seryl-[protein] + alpha-D-glucose 1-phosphate = alpha-D-glucose 1,6-bisphosphate + L-seryl-[protein]. It carries out the reaction alpha-D-glucose 1,6-bisphosphate + L-seryl-[protein] = O-phospho-L-seryl-[protein] + alpha-D-glucose 6-phosphate. In terms of biological role, catalyzes the conversion of the nucleoside breakdown products ribose-1-phosphate and deoxyribose-1-phosphate to the corresponding 5-phosphopentoses. Catalyzes the reversible isomerization of alpha-D-glucose 1-phosphate to alpha-D-glucose 6-phosphate but with a lower catalytic efficiency. The mechanism proceeds via the intermediate compound alpha-D-glucose 1,6-bisphosphate. In vitro, also has a low glucose 1,6-bisphosphate synthase activity which is most probably not physiologically relevant. This chain is Phosphopentomutase, found in Mus musculus (Mouse).